Reading from the N-terminus, the 240-residue chain is Biosynthetic peptidoglycan transglycosylase (240 aa).

A helical membrane pass occupies residues alanine 12–proline 31.

It belongs to the glycosyltransferase 51 family.

Its subcellular location is the cell inner membrane. The enzyme catalyses [GlcNAc-(1-&gt;4)-Mur2Ac(oyl-L-Ala-gamma-D-Glu-L-Lys-D-Ala-D-Ala)](n)-di-trans,octa-cis-undecaprenyl diphosphate + beta-D-GlcNAc-(1-&gt;4)-Mur2Ac(oyl-L-Ala-gamma-D-Glu-L-Lys-D-Ala-D-Ala)-di-trans,octa-cis-undecaprenyl diphosphate = [GlcNAc-(1-&gt;4)-Mur2Ac(oyl-L-Ala-gamma-D-Glu-L-Lys-D-Ala-D-Ala)](n+1)-di-trans,octa-cis-undecaprenyl diphosphate + di-trans,octa-cis-undecaprenyl diphosphate + H(+). It participates in cell wall biogenesis; peptidoglycan biosynthesis. Functionally, peptidoglycan polymerase that catalyzes glycan chain elongation from lipid-linked precursors. The polypeptide is Biosynthetic peptidoglycan transglycosylase (Pseudomonas fluorescens (strain ATCC BAA-477 / NRRL B-23932 / Pf-5)).